We begin with the raw amino-acid sequence, 299 residues long: Hydroxymethylglutaryl-CoA lyase YngG (299 aa).

Residues 7–274 (VTIKEVGPRD…KTNVKLEKLL (268 aa)) enclose the Pyruvate carboxyltransferase domain. A substrate-binding site is contributed by arginine 15. Aspartate 16, histidine 207, and histidine 209 together coordinate a divalent metal cation. Residue cysteine 240 is part of the active site. Asparagine 249 contacts a divalent metal cation.

This sequence belongs to the HMG-CoA lyase family. Homodimer and homotetramer.

The catalysed reaction is (3S)-3-hydroxy-3-methylglutaryl-CoA = acetoacetate + acetyl-CoA. It functions in the pathway metabolic intermediate metabolism; (S)-3-hydroxy-3-methylglutaryl-CoA degradation; acetoacetate from (S)-3-hydroxy-3-methylglutaryl-CoA: step 1/1. Involved in the catabolism of branched amino acids such as leucine. The chain is Hydroxymethylglutaryl-CoA lyase YngG (yngG) from Bacillus subtilis (strain 168).